Consider the following 604-residue polypeptide: uncharacterized protein (604 aa).

The first 40 residues, 1–40 (MWLQQRIKVFPGLLSSSWARRVLAVSGFLVIIYWYIFSGS), serve as a signal peptide directing secretion. At 41 to 563 (HYRSFWYSGK…EEHMAKQYRG (523 aa)) the chain is on the extracellular side. Asparagine 337 carries an N-linked (GlcNAc...) asparagine glycan. The chain crosses the membrane as a helical span at residues 564–584 (LPFLFWFSVASLITLFHLFLF). Residues 585–604 (KLIYNEYCGPGAKPLFRSKV) lie on the Cytoplasmic side of the membrane.

The protein resides in the membrane. This is an uncharacterized protein from Xenopus laevis (African clawed frog).